The primary structure comprises 75 residues: Putative sulfur carrier protein MJ0990 (75 aa).

Residue Cys-15 is the Cysteine persulfide intermediate of the active site.

This sequence belongs to the sulfur carrier protein TusA family.

This is Putative sulfur carrier protein MJ0990 from Methanocaldococcus jannaschii (strain ATCC 43067 / DSM 2661 / JAL-1 / JCM 10045 / NBRC 100440) (Methanococcus jannaschii).